The primary structure comprises 261 residues: Cytochrome c oxidase subunit 3 (261 aa).

Residues 1–15 (MTHQTHAYHMVNPSP) are Mitochondrial matrix-facing. The helical transmembrane segment at 16-34 (WPLTGALSALLMTSGLAMW) threads the bilayer. Over 35-40 (FHFNST) the chain is Mitochondrial intermembrane. Residues 41 to 66 (ILLMIGLTTNTLTMYQWWRDVIREST) form a helical membrane-spanning segment. At 67 to 72 (FQGHHT) the chain is on the mitochondrial matrix side. The helical transmembrane segment at 73–105 (PTVQKGLRYGMILFIISEVLFFTGFFWAFYHSS) threads the bilayer. Over 106 to 128 (LAPTPELGGCWPPTGIHPLNPLE) the chain is Mitochondrial intermembrane. Residues 129–152 (VPLLNTSVLLASGVSITWAHHSLM) traverse the membrane as a helical segment. Topologically, residues 153–155 (EGN) are mitochondrial matrix. The chain crosses the membrane as a helical span at residues 156-183 (RYPMLQALFITIALGVYFTLLQASEYYE). Residues 184-190 (APFTISD) are Mitochondrial intermembrane-facing. A helical membrane pass occupies residues 191 to 223 (GVYGSTFFVATGFHGLHVIIGSTFLIVCFFRQL). The Mitochondrial matrix portion of the chain corresponds to 224–232 (KFHFTSNHH). Residues 233–256 (FGFEAAAWYWHFVDVVWLFLYVSI) traverse the membrane as a helical segment. Residues 257–261 (YWWGS) lie on the Mitochondrial intermembrane side of the membrane.

It belongs to the cytochrome c oxidase subunit 3 family. In terms of assembly, component of the cytochrome c oxidase (complex IV, CIV), a multisubunit enzyme composed of 14 subunits. The complex is composed of a catalytic core of 3 subunits MT-CO1, MT-CO2 and MT-CO3, encoded in the mitochondrial DNA, and 11 supernumerary subunits COX4I, COX5A, COX5B, COX6A, COX6B, COX6C, COX7A, COX7B, COX7C, COX8 and NDUFA4, which are encoded in the nuclear genome. The complex exists as a monomer or a dimer and forms supercomplexes (SCs) in the inner mitochondrial membrane with NADH-ubiquinone oxidoreductase (complex I, CI) and ubiquinol-cytochrome c oxidoreductase (cytochrome b-c1 complex, complex III, CIII), resulting in different assemblies (supercomplex SCI(1)III(2)IV(1) and megacomplex MCI(2)III(2)IV(2)).

It localises to the mitochondrion inner membrane. It catalyses the reaction 4 Fe(II)-[cytochrome c] + O2 + 8 H(+)(in) = 4 Fe(III)-[cytochrome c] + 2 H2O + 4 H(+)(out). Its function is as follows. Component of the cytochrome c oxidase, the last enzyme in the mitochondrial electron transport chain which drives oxidative phosphorylation. The respiratory chain contains 3 multisubunit complexes succinate dehydrogenase (complex II, CII), ubiquinol-cytochrome c oxidoreductase (cytochrome b-c1 complex, complex III, CIII) and cytochrome c oxidase (complex IV, CIV), that cooperate to transfer electrons derived from NADH and succinate to molecular oxygen, creating an electrochemical gradient over the inner membrane that drives transmembrane transport and the ATP synthase. Cytochrome c oxidase is the component of the respiratory chain that catalyzes the reduction of oxygen to water. Electrons originating from reduced cytochrome c in the intermembrane space (IMS) are transferred via the dinuclear copper A center (CU(A)) of subunit 2 and heme A of subunit 1 to the active site in subunit 1, a binuclear center (BNC) formed by heme A3 and copper B (CU(B)). The BNC reduces molecular oxygen to 2 water molecules using 4 electrons from cytochrome c in the IMS and 4 protons from the mitochondrial matrix. This chain is Cytochrome c oxidase subunit 3 (MT-CO3), found in Raphicerus campestris (Steenbok).